A 529-amino-acid polypeptide reads, in one-letter code: Phosphoenolpyruvate carboxykinase (ATP) (529 aa).

Position 52 (Arg-52) interacts with substrate. The Ca(2+) site is built by Arg-130, Asn-131, and Phe-133. Positions 191 and 197 each coordinate substrate. Residues Lys-197, His-216, and Gly-232–Thr-240 contribute to the ATP site. Mn(2+) is bound by residues Lys-197 and His-216. Asp-253 is a binding site for Mn(2+). Gly-267 provides a ligand contact to Ca(2+). Residues Glu-281, Arg-319, Arg-438–Phe-439, Phe-439, and Thr-444 each bind ATP. Arg-319 contacts substrate.

Belongs to the phosphoenolpyruvate carboxykinase (ATP) family. In terms of assembly, dimer of dimers. Mn(2+) serves as cofactor.

It localises to the cytoplasm. It carries out the reaction oxaloacetate + ATP = phosphoenolpyruvate + ADP + CO2. It participates in carbohydrate biosynthesis; gluconeogenesis. Allosterically activated by calcium. Functionally, involved in gluconeogenesis. Catalyzes the conversion of oxaloacetate (OAA) to phosphoenolpyruvate (PEP) through direct phosphoryl transfer between the nucleoside triphosphate and OAA. The protein is Phosphoenolpyruvate carboxykinase (ATP) of Thermus thermophilus (strain ATCC 27634 / DSM 579 / HB8).